We begin with the raw amino-acid sequence, 200 residues long: Large ribosomal subunit protein uL4 (200 aa).

Positions 43 to 67 (RAQKTRAEVSGSGKKPWRQKGTGRA) are disordered.

Belongs to the universal ribosomal protein uL4 family. In terms of assembly, part of the 50S ribosomal subunit.

Its function is as follows. One of the primary rRNA binding proteins, this protein initially binds near the 5'-end of the 23S rRNA. It is important during the early stages of 50S assembly. It makes multiple contacts with different domains of the 23S rRNA in the assembled 50S subunit and ribosome. In terms of biological role, forms part of the polypeptide exit tunnel. The sequence is that of Large ribosomal subunit protein uL4 from Haemophilus influenzae (strain PittEE).